The following is a 1386-amino-acid chain: DNA-directed RNA polymerase subunit beta'' (1386 aa).

Positions 220, 289, 296, and 299 each coordinate Zn(2+).

This sequence belongs to the RNA polymerase beta' chain family. RpoC2 subfamily. In terms of assembly, in plastids the minimal PEP RNA polymerase catalytic core is composed of four subunits: alpha, beta, beta', and beta''. When a (nuclear-encoded) sigma factor is associated with the core the holoenzyme is formed, which can initiate transcription. Zn(2+) is required as a cofactor.

It localises to the plastid. The protein resides in the chloroplast. It catalyses the reaction RNA(n) + a ribonucleoside 5'-triphosphate = RNA(n+1) + diphosphate. Functionally, DNA-dependent RNA polymerase catalyzes the transcription of DNA into RNA using the four ribonucleoside triphosphates as substrates. The chain is DNA-directed RNA polymerase subunit beta'' from Marchantia polymorpha (Common liverwort).